The chain runs to 475 residues: FAD-dependent monooxygenase sdgC (475 aa).

The N-terminal stretch at 1 to 23 (MDKRSFKVIVVGGSIAGLTLAHS) is a signal peptide. Residues Glu35, Gly49, and Arg126 each coordinate FAD. Asn236 is a glycosylation site (N-linked (GlcNAc...) asparagine). Ala330 lines the FAD pocket. The helical transmembrane segment at 446 to 466 (ISGVLLLVIPIIALVYGYSVI) threads the bilayer.

It belongs to the paxM FAD-dependent monooxygenase family. FAD is required as a cofactor.

The protein localises to the membrane. It participates in secondary metabolite biosynthesis. Functionally, FAD-dependent monooxygenase; part of the gene cluster that mediates the biosynthesis of the polyenes aspernidgulenes. The carbon backbone of aspernidgulenes is synthesized by the HR-PKS sdgA, which accepts acetyl-CoA as the starter unit and performs malonyl-CoA extensions as well as regioselective methylation and reduction. The resulting nonaketide offloads the HR-PKS by intramolecular lactonization to yield the 5,6-dihydro-alpha-pyrone-containing hexaenoic acids preaspernidgulene A1 and A2. The FAD-dependent monooxygenase sdgC then installs the first epoxide on the penultimate double bond. Subsequently, the FAD-dependent monooxygenase sdgF presumably generates a ketone intermediate through Meinwald rearrangement involving a hydride shift. Next, sdgC introduces another epoxide on the last olefin of the ketone intermediate after E/Z isomerization. The epoxide hydrolase sdgD then catalyzes stereospecific cyclization of the 5,6-dihydro-alpha-pyrone and opening of the epoxide ring to form an oxygenated trimethylcyclopentanone and an oxabicyclo[2.2.1]heptane unit. Finally, the bicyclic unit undergoes hydrolytic cleavage, either spontaneously or catalyzed by sdgD, to assemble the dimethyl-gamma-lactone moiety in aspernidgulene A1. This is FAD-dependent monooxygenase sdgC from Emericella nidulans (strain FGSC A4 / ATCC 38163 / CBS 112.46 / NRRL 194 / M139) (Aspergillus nidulans).